The sequence spans 154 residues: 3-hydroxyacyl-[acyl-carrier-protein] dehydratase FabZ (154 aa).

Residue His55 is part of the active site.

It belongs to the thioester dehydratase family. FabZ subfamily.

It localises to the cytoplasm. The enzyme catalyses a (3R)-hydroxyacyl-[ACP] = a (2E)-enoyl-[ACP] + H2O. Involved in unsaturated fatty acids biosynthesis. Catalyzes the dehydration of short chain beta-hydroxyacyl-ACPs and long chain saturated and unsaturated beta-hydroxyacyl-ACPs. The sequence is that of 3-hydroxyacyl-[acyl-carrier-protein] dehydratase FabZ from Oleidesulfovibrio alaskensis (strain ATCC BAA-1058 / DSM 17464 / G20) (Desulfovibrio alaskensis).